Reading from the N-terminus, the 385-residue chain is Actin-2 (385 aa).

This sequence belongs to the actin family. ARP1 subfamily.

Its subcellular location is the cytoplasm. It is found in the cytoskeleton. The protein is Actin-2 of Pneumocystis carinii.